We begin with the raw amino-acid sequence, 390 residues long: RNA binding protein fox-1 homolog 2 (390 aa).

Residues 1 to 127 (MQNEPLTPGY…STPKRLHVSN (127 aa)) are disordered. 2 stretches are compositionally biased toward polar residues: residues 18 to 28 (SQGNQEPTTTP) and 65 to 95 (GEHN…SLTT). H67 is modified (phosphothreonine). Residues 97-117 (GGAQTDGQQSQTQSSENSESK) are compositionally biased toward low complexity. In terms of domain architecture, RRM spans 121–197 (KRLHVSNIPF…RKIEVNNATA (77 aa)). Omega-N-methylarginine is present on residues G249, G267, F268, A277, and R281. 2 positions are modified to asymmetric dimethylarginine: R297 and R329. Asymmetric dimethylarginine; alternate occurs at positions 381 and 386. R381 and R386 each carry omega-N-methylarginine; alternate.

Interacts with ER-alpha N-terminal activation domain. Interacts with RBPMS; the interaction allows cooperative assembly of stable cell-specific alternative splicing regulatory complexes.

It localises to the nucleus. Its subcellular location is the cytoplasm. In terms of biological role, RNA-binding protein that regulates alternative splicing events by binding to 5'-UGCAUGU-3' elements. Prevents binding of U2AF2 to the 3'-splice site. Regulates alternative splicing of tissue-specific exons and of differentially spliced exons during erythropoiesis. RNA-binding protein that seems to act as a coregulatory factor of ER-alpha. Together with RNA binding proteins RBPMS and MBNL1/2, activates vascular smooth muscle cells alternative splicing events. The chain is RNA binding protein fox-1 homolog 2 (RBFOX2) from Homo sapiens (Human).